The primary structure comprises 125 residues: Desulfoferrodoxin homolog (125 aa).

Residues cysteine 10, cysteine 13, cysteine 29, cysteine 30, histidine 49, histidine 69, histidine 75, cysteine 116, and histidine 119 each contribute to the Fe cation site.

It belongs to the desulfoferrodoxin family. Fe(3+) serves as cofactor. Cu(2+) is required as a cofactor.

The polypeptide is Desulfoferrodoxin homolog (Archaeoglobus fulgidus (strain ATCC 49558 / DSM 4304 / JCM 9628 / NBRC 100126 / VC-16)).